The sequence spans 289 residues: Shikimate dehydrogenase (NADP(+)) (289 aa).

Shikimate is bound by residues 22–24 (SRS) and Thr69. The active-site Proton acceptor is the Lys73. Glu85 provides a ligand contact to NADP(+). The shikimate site is built by Asn94 and Asp109. NADP(+)-binding positions include 134–138 (GAGGA), 158–163 (NRTLSR), and Ile226. Residue Tyr228 coordinates shikimate. Gly249 is a binding site for NADP(+).

It belongs to the shikimate dehydrogenase family. In terms of assembly, homodimer.

It catalyses the reaction shikimate + NADP(+) = 3-dehydroshikimate + NADPH + H(+). Its pathway is metabolic intermediate biosynthesis; chorismate biosynthesis; chorismate from D-erythrose 4-phosphate and phosphoenolpyruvate: step 4/7. Involved in the biosynthesis of the chorismate, which leads to the biosynthesis of aromatic amino acids. Catalyzes the reversible NADPH linked reduction of 3-dehydroshikimate (DHSA) to yield shikimate (SA). This is Shikimate dehydrogenase (NADP(+)) from Brucella canis (strain ATCC 23365 / NCTC 10854 / RM-666).